The primary structure comprises 139 residues: UPF0310 protein RSal33209_2865 (139 aa).

Belongs to the UPF0310 family.

This Renibacterium salmoninarum (strain ATCC 33209 / DSM 20767 / JCM 11484 / NBRC 15589 / NCIMB 2235) protein is UPF0310 protein RSal33209_2865.